Reading from the N-terminus, the 393-residue chain is GDP-mannose:cellobiosyl-diphosphopolyprenol alpha-mannosyltransferase (393 aa).

It belongs to the glycosyltransferase group 1 family. Glycosyltransferase 4 subfamily.

It catalyses the reaction beta-D-Glc-(1-&gt;4)-alpha-D-Glc-di-trans,octa-cis-undecaprenyl diphosphate + GDP-alpha-D-mannose = alpha-D-Man-(1-&gt;3)-beta-D-Glc-(1-&gt;4)-alpha-D-Glc-1-di-trans,octa-cis-undecaprenyl diphosphate + GDP + H(+). Functionally, involved in the biosynthesis of the exopolysaccharide acetan, a water-soluble polysaccharide involved in production of bacterial cellulose (BC). The chain is GDP-mannose:cellobiosyl-diphosphopolyprenol alpha-mannosyltransferase (aceC) from Komagataeibacter xylinus (Gluconacetobacter xylinus).